The primary structure comprises 164 residues: MKFTGKVWKFGDNIDTDAIIPARYLNTFDPQALAAHCMEDADPDFPKKVSAGDIIVAGENFGCGSSREHAPIAIKAAGVSCVIAKSFARIFYRNAFNMGLPIFESAELFDRVDEGQTITVDGDSGVILLEGAQTPLSIQPIPPFMQELIADGGLMKHLARKNRG.

Belongs to the LeuD family. LeuD type 2 subfamily. Heterodimer of LeuC and LeuD.

The enzyme catalyses (2R,3S)-3-isopropylmalate = (2S)-2-isopropylmalate. The protein operates within amino-acid biosynthesis; L-leucine biosynthesis; L-leucine from 3-methyl-2-oxobutanoate: step 2/4. Functionally, catalyzes the isomerization between 2-isopropylmalate and 3-isopropylmalate, via the formation of 2-isopropylmaleate. This Syntrophus aciditrophicus (strain SB) protein is 3-isopropylmalate dehydratase small subunit.